A 157-amino-acid polypeptide reads, in one-letter code: Ribosome maturation factor RimP (157 aa).

Belongs to the RimP family.

The protein localises to the cytoplasm. Functionally, required for maturation of 30S ribosomal subunits. This chain is Ribosome maturation factor RimP, found in Synechococcus sp. (strain CC9311).